The chain runs to 542 residues: Chaperonin GroEL 2 (542 aa).

Residues 29–32, 86–90, Gly413, 477–479, and Asp493 each bind ATP; these read TLGP, DGTTT, and NAA.

The protein belongs to the chaperonin (HSP60) family. As to quaternary structure, forms a cylinder of 14 subunits composed of two heptameric rings stacked back-to-back. Interacts with the co-chaperonin GroES.

It is found in the cytoplasm. It carries out the reaction ATP + H2O + a folded polypeptide = ADP + phosphate + an unfolded polypeptide.. Together with its co-chaperonin GroES, plays an essential role in assisting protein folding. The GroEL-GroES system forms a nano-cage that allows encapsulation of the non-native substrate proteins and provides a physical environment optimized to promote and accelerate protein folding. In Frankia alni (strain DSM 45986 / CECT 9034 / ACN14a), this protein is Chaperonin GroEL 2.